The primary structure comprises 352 residues: Molybdenum import ATP-binding protein ModC (352 aa).

The ABC transporter domain maps to Met-1–Glu-229. An ATP-binding site is contributed by Gly-31–Thr-38. Positions Gln-289 to Ala-352 constitute a Mop domain.

Belongs to the ABC transporter superfamily. Molybdate importer (TC 3.A.1.8) family. As to quaternary structure, the complex is composed of two ATP-binding proteins (ModC), two transmembrane proteins (ModB) and a solute-binding protein (ModA).

It localises to the cell inner membrane. It catalyses the reaction molybdate(out) + ATP + H2O = molybdate(in) + ADP + phosphate + H(+). In terms of biological role, part of the ABC transporter complex ModABC involved in molybdenum import. Responsible for energy coupling to the transport system. This chain is Molybdenum import ATP-binding protein ModC, found in Escherichia coli O6:K15:H31 (strain 536 / UPEC).